The following is an 85-amino-acid chain: Small ribosomal subunit protein bS16 (85 aa).

It belongs to the bacterial ribosomal protein bS16 family.

The protein is Small ribosomal subunit protein bS16 of Pseudomonas syringae pv. tomato (strain ATCC BAA-871 / DC3000).